Here is a 516-residue protein sequence, read N- to C-terminus: Na(+)/H(+) antiporter NhaB (516 aa).

12 helical membrane-spanning segments follow: residues 23 to 43, 61 to 80, 97 to 117, 120 to 140, 144 to 164, 202 to 222, 238 to 258, 303 to 323, 348 to 368, 391 to 411, 447 to 467, and 475 to 495; these read LALI…PFVA, CYPL…IGMT, LLLM…LFVF, LLLG…AAAF, FLDA…FYGI, LMMH…VGEP, FFLR…LTCL, ALIG…VGLI, TEAL…AVII, LFYL…VGTV, ATPN…APLI, and VWMA…CVEF.

The protein belongs to the NhaB Na(+)/H(+) (TC 2.A.34) antiporter family.

The protein localises to the cell inner membrane. It carries out the reaction 2 Na(+)(in) + 3 H(+)(out) = 2 Na(+)(out) + 3 H(+)(in). Na(+)/H(+) antiporter that extrudes sodium in exchange for external protons. The protein is Na(+)/H(+) antiporter NhaB of Klebsiella pneumoniae subsp. pneumoniae (strain ATCC 700721 / MGH 78578).